The chain runs to 332 residues: UDP-3-O-acylglucosamine N-acyltransferase (332 aa).

His235 serves as the catalytic Proton acceptor.

Belongs to the transferase hexapeptide repeat family. LpxD subfamily. In terms of assembly, homotrimer.

The catalysed reaction is a UDP-3-O-[(3R)-3-hydroxyacyl]-alpha-D-glucosamine + a (3R)-hydroxyacyl-[ACP] = a UDP-2-N,3-O-bis[(3R)-3-hydroxyacyl]-alpha-D-glucosamine + holo-[ACP] + H(+). It functions in the pathway bacterial outer membrane biogenesis; LPS lipid A biosynthesis. Functionally, catalyzes the N-acylation of UDP-3-O-acylglucosamine using 3-hydroxyacyl-ACP as the acyl donor. Is involved in the biosynthesis of lipid A, a phosphorylated glycolipid that anchors the lipopolysaccharide to the outer membrane of the cell. The sequence is that of UDP-3-O-acylglucosamine N-acyltransferase from Fusobacterium nucleatum subsp. nucleatum (strain ATCC 25586 / DSM 15643 / BCRC 10681 / CIP 101130 / JCM 8532 / KCTC 2640 / LMG 13131 / VPI 4355).